A 154-amino-acid polypeptide reads, in one-letter code: Urease accessory protein UreE (154 aa).

Positions 134–154 (PESGAYGKSGHNHGHSHSHED) are disordered. Positions 143-154 (GHNHGHSHSHED) are enriched in basic residues.

Belongs to the UreE family.

Its subcellular location is the cytoplasm. Its function is as follows. Involved in urease metallocenter assembly. Binds nickel. Probably functions as a nickel donor during metallocenter assembly. This is Urease accessory protein UreE from Alteromonas mediterranea (strain DSM 17117 / CIP 110805 / LMG 28347 / Deep ecotype).